We begin with the raw amino-acid sequence, 207 residues long: Sodium/potassium-transporting ATPase subunit beta-1-interacting protein 1 (207 aa).

Residues 1–21 (MGKCSGRCTLVAFCCLQLVAA) form the signal peptide. At 22 to 34 (LERQIFDFLGYQW) the chain is on the extracellular side. Residues 35 to 55 (APILANFLHIMAVILGIFGTV) traverse the membrane as a helical segment. Topologically, residues 56–61 (QYRSRY) are cytoplasmic. The chain crosses the membrane as a helical span at residues 62–82 (LILYAAWLVLWVGWNAFIICF). Over 83–146 (YLEVGQLSQD…GCLLDYPYIE (64 aa)) the chain is Extracellular. Residue asparagine 100 is glycosylated (N-linked (GlcNAc...) asparagine). A helical transmembrane segment spans residues 147-167 (ALSSALQIFLALFGFVFACYV). Over 168–207 (SKVFLEEEDSFDFIGGFDSYGYQAPQKTSHLQLQPLYTSG) the chain is Cytoplasmic.

It belongs to the NKAIN family. Interacts with ATP1B1 C-terminus.

The protein localises to the cell membrane. This is Sodium/potassium-transporting ATPase subunit beta-1-interacting protein 1 (NKAIN1) from Homo sapiens (Human).